Here is a 274-residue protein sequence, read N- to C-terminus: 2,3,4,5-tetrahydropyridine-2,6-dicarboxylate N-succinyltransferase (274 aa).

Substrate is bound by residues Arg107 and Asp144.

The protein belongs to the transferase hexapeptide repeat family. Homotrimer.

It is found in the cytoplasm. The enzyme catalyses (S)-2,3,4,5-tetrahydrodipicolinate + succinyl-CoA + H2O = (S)-2-succinylamino-6-oxoheptanedioate + CoA. It participates in amino-acid biosynthesis; L-lysine biosynthesis via DAP pathway; LL-2,6-diaminopimelate from (S)-tetrahydrodipicolinate (succinylase route): step 1/3. The protein is 2,3,4,5-tetrahydropyridine-2,6-dicarboxylate N-succinyltransferase of Cereibacter sphaeroides (strain ATCC 17023 / DSM 158 / JCM 6121 / CCUG 31486 / LMG 2827 / NBRC 12203 / NCIMB 8253 / ATH 2.4.1.) (Rhodobacter sphaeroides).